Reading from the N-terminus, the 402-residue chain is MISATATAAFLAAAPASSSSCTTHRRRSGLPAISASLATASSTEEPLLVRAARGEDGLPRPPAWMMRQAGRYMAEYQALAKRHPSFRERSETTELIVEITLQPWRAFAPDGVILFSDILTPLPAIGVPFDISDSKGPVIQSPVRSEEQVRELTPIDFEKLRFVGESLKILRTEIDGQAALLGFVGAPWTIATYVVEGGMTNTYTNIKSMCHTAPNVLRGLLSHLADAISEYIIYQVNSGAQCIQIFDSWGGQLPPHVWEQWSKPYIKQIVNKIKIECPNVPLVLYINGNGGLLERMTDTGVDVIGLDWTVDMADGRRRLGNKISVQGNVDPAFLFSPLPVLTDEIHRVVKSAGPKGHILNLGHGVLVKTPEEAVAHFFDVTRSLRYDTLFQGCVTEVLEPVA.

The transit peptide at 1–50 directs the protein to the chloroplast; sequence MISATATAAFLAAAPASSSSCTTHRRRSGLPAISASLATASSTEEPLLVR. Substrate contacts are provided by residues 67 to 71, Phe86, Ser116, Asp117, Tyr193, Ser248, and His363; that span reads RQAGR.

Belongs to the uroporphyrinogen decarboxylase family. Homodimer.

The protein localises to the plastid. Its subcellular location is the chloroplast. It carries out the reaction uroporphyrinogen III + 4 H(+) = coproporphyrinogen III + 4 CO2. The protein operates within porphyrin-containing compound metabolism; protoporphyrin-IX biosynthesis; coproporphyrinogen-III from 5-aminolevulinate: step 4/4. Functionally, catalyzes the decarboxylation of four acetate groups of uroporphyrinogen-III to yield coproporphyrinogen-III. This is Uroporphyrinogen decarboxylase 1, chloroplastic from Oryza sativa subsp. japonica (Rice).